We begin with the raw amino-acid sequence, 122 residues long: Large ribosomal subunit protein uL14 (122 aa).

The protein belongs to the universal ribosomal protein uL14 family. As to quaternary structure, part of the 50S ribosomal subunit. Forms a cluster with proteins L3 and L19. In the 70S ribosome, L14 and L19 interact and together make contacts with the 16S rRNA in bridges B5 and B8.

In terms of biological role, binds to 23S rRNA. Forms part of two intersubunit bridges in the 70S ribosome. This chain is Large ribosomal subunit protein uL14, found in Gluconacetobacter diazotrophicus (strain ATCC 49037 / DSM 5601 / CCUG 37298 / CIP 103539 / LMG 7603 / PAl5).